A 97-amino-acid polypeptide reads, in one-letter code: Large ribosomal subunit protein uL23 (97 aa).

It belongs to the universal ribosomal protein uL23 family. Part of the 50S ribosomal subunit. Contacts protein L29, and trigger factor when it is bound to the ribosome.

Functionally, one of the early assembly proteins it binds 23S rRNA. One of the proteins that surrounds the polypeptide exit tunnel on the outside of the ribosome. Forms the main docking site for trigger factor binding to the ribosome. The chain is Large ribosomal subunit protein uL23 from Anaeromyxobacter dehalogenans (strain 2CP-C).